Consider the following 360-residue polypeptide: Peptide chain release factor 1 (360 aa).

The residue at position 235 (glutamine 235) is an N5-methylglutamine. The segment at alanine 284–proline 313 is disordered.

It belongs to the prokaryotic/mitochondrial release factor family. In terms of processing, methylated by PrmC. Methylation increases the termination efficiency of RF1.

It is found in the cytoplasm. Peptide chain release factor 1 directs the termination of translation in response to the peptide chain termination codons UAG and UAA. The sequence is that of Peptide chain release factor 1 from Escherichia coli O127:H6 (strain E2348/69 / EPEC).